The primary structure comprises 131 residues: UPF0102 protein YraN (131 aa).

Positions M1–G20 are disordered.

It belongs to the UPF0102 family.

The chain is UPF0102 protein YraN from Escherichia coli O139:H28 (strain E24377A / ETEC).